Reading from the N-terminus, the 155-residue chain is Probable adenylyl-sulfate kinase (155 aa).

9–16 (GPSGAGKT) is a binding site for ATP. The active-site Phosphoserine intermediate is the serine 83. The disordered stretch occupies residues 134–155 (LDGEYEEPENPEVVVDTDKNDR).

Belongs to the APS kinase family.

It catalyses the reaction adenosine 5'-phosphosulfate + ATP = 3'-phosphoadenylyl sulfate + ADP + H(+). It participates in sulfur metabolism; hydrogen sulfide biosynthesis; sulfite from sulfate: step 2/3. Its function is as follows. Catalyzes the synthesis of activated sulfate. This Archaeoglobus fulgidus (strain ATCC 49558 / DSM 4304 / JCM 9628 / NBRC 100126 / VC-16) protein is Probable adenylyl-sulfate kinase (cysC).